Consider the following 166-residue polypeptide: Protein phosphatase 1 regulatory subunit 1A (166 aa).

At Met-1 the chain carries N-acetylmethionine. The interval 1–166 (MEQDNSPRKI…SQDSQGASAV (166 aa)) is disordered. Positions 9–12 (KIQF) are essential for activity. Residues 19–29 (PHLDPEAAEQI) show a composition bias toward basic and acidic residues. Position 35 is a phosphothreonine; by PKA (Thr-35). The interval 42 to 54 (TSDQSSPEVDEDR) is essential for activity. A phosphoserine mark is found at Ser-43, Ser-46, Ser-47, and Ser-67. A compositionally biased stretch (low complexity) spans 104 to 114 (AAEGTGAQESQ). Over residues 143–152 (AQERRGEEPS) the composition is skewed to basic and acidic residues. The segment at 143 to 166 (AQERRGEEPSTAKTSQDSQGASAV) is interaction with PPP1R15A. Positions 153 to 166 (TAKTSQDSQGASAV) are enriched in polar residues.

This sequence belongs to the protein phosphatase inhibitor 1 family. Interacts with PPP1R15A. Phosphorylation of Thr-35 is required for activity.

Its function is as follows. Inhibitor of protein-phosphatase 1. This protein may be important in hormonal control of glycogen metabolism. Hormones that elevate intracellular cAMP increase I-1 activity in many tissues. I-1 activation may impose cAMP control over proteins that are not directly phosphorylated by PKA. Following a rise in intracellular calcium, I-1 is inactivated by calcineurin (or PP2B). Does not inhibit type-2 phosphatases. The sequence is that of Protein phosphatase 1 regulatory subunit 1A (PPP1R1A) from Oryctolagus cuniculus (Rabbit).